The chain runs to 238 residues: Tetraspanin-4 (238 aa).

The Cytoplasmic segment spans residues 1 to 13 (MARGCLQGVKYLM). Residues 14–34 (FAFNLLFWLGGCGVLGVGIWL) traverse the membrane as a helical segment. The Extracellular segment spans residues 35-55 (AATQGNFATLSSSFPSLSAAN). The helical transmembrane segment at 56–76 (LLIVTGTFVMAIGFVGCIGAL) threads the bilayer. At 77-85 (KENKCLLLT) the chain is on the cytoplasmic side. Residues 86–106 (FFVLLLLVFLLEATIAVLFFA) traverse the membrane as a helical segment. Over 107-201 (YSDKIDSYAQ…ETVKAWLQEN (95 aa)) the chain is Extracellular. 2 N-linked (GlcNAc...) asparagine glycosylation sites follow: asparagine 152 and asparagine 161. Residues 202-222 (LLAVGIFGLCTALVQILGLTF) form a helical membrane-spanning segment. The Cytoplasmic portion of the chain corresponds to 223-238 (AMTMYCQVVKADTYCA).

Belongs to the tetraspanin (TM4SF) family. As to quaternary structure, forms a complex with integrins.

The protein localises to the membrane. The chain is Tetraspanin-4 (Tspan4) from Mus musculus (Mouse).